Consider the following 159-residue polypeptide: Deoxyuridine 5'-triphosphate nucleotidohydrolase (159 aa).

Substrate contacts are provided by residues 78–80, Asn91, 95–97, and Met105; these read RSG and LID.

This sequence belongs to the dUTPase family. It depends on Mg(2+) as a cofactor.

The enzyme catalyses dUTP + H2O = dUMP + diphosphate + H(+). Its pathway is pyrimidine metabolism; dUMP biosynthesis; dUMP from dCTP (dUTP route): step 2/2. In terms of biological role, this enzyme is involved in nucleotide metabolism: it produces dUMP, the immediate precursor of thymidine nucleotides and it decreases the intracellular concentration of dUTP so that uracil cannot be incorporated into DNA. This Buchnera aphidicola subsp. Schizaphis graminum (strain Sg) protein is Deoxyuridine 5'-triphosphate nucleotidohydrolase.